A 386-amino-acid chain; its full sequence is 1-deoxy-D-xylulose 5-phosphate reductoisomerase (386 aa).

Residues serine 10, glycine 11, serine 12, valine 13, asparagine 38, and asparagine 120 each contribute to the NADPH site. Lysine 121 provides a ligand contact to 1-deoxy-D-xylulose 5-phosphate. Residue glutamate 122 coordinates NADPH. Aspartate 146 is a Mn(2+) binding site. 1-deoxy-D-xylulose 5-phosphate contacts are provided by serine 147, glutamate 148, serine 172, and histidine 195. Residue glutamate 148 participates in Mn(2+) binding. Residue glycine 201 participates in NADPH binding. 1-deoxy-D-xylulose 5-phosphate is bound by residues serine 208, asparagine 213, lysine 214, and glutamate 217. Position 217 (glutamate 217) interacts with Mn(2+).

The protein belongs to the DXR family. Requires Mg(2+) as cofactor. The cofactor is Mn(2+).

The enzyme catalyses 2-C-methyl-D-erythritol 4-phosphate + NADP(+) = 1-deoxy-D-xylulose 5-phosphate + NADPH + H(+). It participates in isoprenoid biosynthesis; isopentenyl diphosphate biosynthesis via DXP pathway; isopentenyl diphosphate from 1-deoxy-D-xylulose 5-phosphate: step 1/6. Its function is as follows. Catalyzes the NADPH-dependent rearrangement and reduction of 1-deoxy-D-xylulose-5-phosphate (DXP) to 2-C-methyl-D-erythritol 4-phosphate (MEP). The protein is 1-deoxy-D-xylulose 5-phosphate reductoisomerase of Leptospira biflexa serovar Patoc (strain Patoc 1 / Ames).